The primary structure comprises 296 residues: MTNPAYFPQLSQLDVSGEMESTYEDIRLTLRVPWVAFGCRVLATFPGYLPLAWRRSAEALITRYAEQAADELRERSLLNIGPLPNLKERLYAAGFDDGEIEKVRRVLYAFNYGNPKYLLLITALSESMQMRPVGGAEVSSELRASIPKGHPKGMDPLLPLVDATKASTEVQGLLKRVADLHYHHGPASDFQALANWPKVLQIVTDEVLAPVARTEQYDAKSRELVTRARELVRGLPGSAGVQRSELMSMLTPNELAGLTGVLFMYQRFIADITISIIHITECLDGAEAASKSPFPI.

Belongs to the HAD-like hydrolase superfamily. S-2-haloalkanoic acid dehalogenase family.

The enzyme catalyses an (S)-2-haloacid + H2O = a (2R)-2-hydroxycarboxylate + a halide anion + H(+). It carries out the reaction an (R)-2-haloacid + H2O = a (2S)-2-hydroxycarboxylate + a halide anion + H(+). Dehalogenates both (S)- and (R)-2-haloalkanoic acids to the corresponding (R)- and (S)-hydroxyalkanoic acids, respectively, with inversion of configuration at C-2. Acts on 2-haloalkanoic acids whose carbon chain lengths are five or less. In Alcaligenes xylosoxydans xylosoxydans (Achromobacter xylosoxidans), this protein is 2-haloacid dehalogenase, configuration-inverting (dhlC).